The sequence spans 178 residues: uncharacterized protein (178 aa).

4 helical membrane-spanning segments follow: residues 3–23 (IPII…FISI), 56–76 (IFLM…NLIF), 101–121 (LILP…VAGF), and 150–170 (LSLI…YITP).

It to M.jannaschii MJ0706 and Synechocystis PCC 6803 slr1478.

The protein localises to the cell membrane. This is an uncharacterized protein from Methanocaldococcus jannaschii (strain ATCC 43067 / DSM 2661 / JAL-1 / JCM 10045 / NBRC 100440) (Methanococcus jannaschii).